The following is a 312-amino-acid chain: Ribosomal RNA small subunit methyltransferase H (312 aa).

S-adenosyl-L-methionine-binding positions include Gly35–His37, Asp55, Phe79, Asp101, and Gln108. Residues Leu286 to Val306 are disordered. A compositionally biased stretch (basic and acidic residues) spans Lys287 to Arg298.

Belongs to the methyltransferase superfamily. RsmH family.

It is found in the cytoplasm. The catalysed reaction is cytidine(1402) in 16S rRNA + S-adenosyl-L-methionine = N(4)-methylcytidine(1402) in 16S rRNA + S-adenosyl-L-homocysteine + H(+). Specifically methylates the N4 position of cytidine in position 1402 (C1402) of 16S rRNA. The sequence is that of Ribosomal RNA small subunit methyltransferase H from Aeromonas hydrophila subsp. hydrophila (strain ATCC 7966 / DSM 30187 / BCRC 13018 / CCUG 14551 / JCM 1027 / KCTC 2358 / NCIMB 9240 / NCTC 8049).